The following is a 798-amino-acid chain: Bromodomain-containing protein 2 (798 aa).

N-acetylmethionine is present on methionine 1. Residues 1-21 are disordered; it reads MLQNVTPHKLPGEGNAGLLGL. The residue at position 6 (threonine 6) is a Phosphothreonine. Serine 36 carries the post-translational modification Phosphoserine. The tract at residues 53–72 is disordered; that stretch reads LQLAPANPPPPEVSNPKKPG. Residues 73–179 form the Bromo 1 domain; sequence RVTNQLQYLH…KIFLQKVASM (107 aa). A protein is bound by residues aspartate 111, tyrosine 154, asparagine 155, lysine 156, aspartate 159, and aspartate 160. 3 disordered regions span residues 267–348, 455–648, and 735–798; these read PPAQ…LSEQ, EPLE…KRQL, and EKRL…SDSG. The span at 284-297 shows a compositional bias: low complexity; it reads TTTPTPTAILAPGS. Serine 297, serine 300, and serine 304 each carry phosphoserine. Over residues 315-331 the composition is skewed to basic and acidic residues; that stretch reads MRRESGRPIKPPRKDLP. A Bromo 2 domain is found at 343-452; the sequence is GKLSEQLKHC…DVFEFRYAKM (110 aa). Residues 480–512 show a composition bias toward acidic residues; it reads SSEESSSESSSEEEEEEDEEDEEEESESSDSEE. The span at 542–564 shows a compositional bias: basic residues; the sequence is KPKRKREKKEKKKKRKAEKHRGR. Positions 553–557 match the Nuclear localization signal motif; the sequence is KKKRK. In terms of domain architecture, NET spans 630–712; that stretch reads DSEEEEESRP…SCLRKKPRKP (83 aa). Phosphoserine is present on serine 631. A compositionally biased stretch (basic and acidic residues) spans 637–648; it reads SRPMSYDEKRQL. Positions 772 to 792 are enriched in low complexity; sequence SASSSSSDSSSSSSSSSSSDT.

Belongs to the BET family. As to quaternary structure, homodimer. Interacts with E2F1. Interacts with (acetylated) STAT3; promoting STAT3 recruitment to chromatin. Interacts with CTCF; promoting BRD2 recruitment to chromatin.

Its subcellular location is the nucleus. It is found in the chromosome. Chromatin reader protein that specifically recognizes and binds histone H4 acetylated at 'Lys-5' and 'Lys-12' (H4K5ac and H4K12ac, respectively), thereby controlling gene expression and remodeling chromatin structures. Recruits transcription factors and coactivators to target gene sites, and activates RNA polymerase II machinery for transcriptional elongation. Plays a key role in genome compartmentalization via its association with CTCF and cohesin: recruited to chromatin by CTCF and promotes formation of topologically associating domains (TADs) via its ability to bind acetylated histones, contributing to CTCF boundary formation and enhancer insulation. Also recognizes and binds acetylated non-histone proteins, such as STAT3. Involved in inflammatory response by regulating differentiation of naive CD4(+) T-cells into T-helper Th17: recognizes and binds STAT3 acetylated at 'Lys-87', promoting STAT3 recruitment to chromatin. In addition to acetylated lysines, also recognizes and binds lysine residues on histones that are both methylated and acetylated on the same side chain to form N6-acetyl-N6-methyllysine (Kacme), an epigenetic mark of active chromatin associated with increased transcriptional initiation. Specifically binds histone H4 acetyl-methylated at 'Lys-5' and 'Lys-12' (H4K5acme and H4K12acme, respectively). This Rattus norvegicus (Rat) protein is Bromodomain-containing protein 2 (Brd2).